Here is a 104-residue protein sequence, read N- to C-terminus: Urease subunit beta (104 aa).

It belongs to the urease beta subunit family. Heterotrimer of UreA (gamma), UreB (beta) and UreC (alpha) subunits. Three heterotrimers associate to form the active enzyme.

The protein localises to the cytoplasm. It carries out the reaction urea + 2 H2O + H(+) = hydrogencarbonate + 2 NH4(+). Its pathway is nitrogen metabolism; urea degradation; CO(2) and NH(3) from urea (urease route): step 1/1. The protein is Urease subunit beta of Mycobacterium bovis (strain BCG / Pasteur 1173P2).